We begin with the raw amino-acid sequence, 705 residues long: CAP-Gly domain-containing linker protein 4 (705 aa).

ANK repeat units lie at residues 65-101 (TSVSELFAILRQWVPQVQQNIDIIGNEILKRGCNVND), 149-180 (TNMNALHYAAYFDVPELIRVILKTSKPKDVDA), and 186-215 (NFGTALHIAAYNLCAGAVKCLLEQGANPAF). The region spanning 303–345 (GTTEFASGQWAGIELDEPEGKNNGSVGKVQYFKCAPKYGIFAP) is the CAP-Gly 1 domain. 2 disordered regions span residues 391–410 (MTSKKDSASESTLSLPPGEE) and 431–479 (TSSL…ANNS). Residues 441–452 (PKKQNAISSNKK) show a composition bias toward polar residues. Over residues 455 to 479 (SKSPSLSSRASAGLNSSATSTANNS) the composition is skewed to low complexity. Residues 505 to 547 (GTTNFAPGYWYGIELEKPHGKNDGSVGGVQYFSCSPRYGIFAP) enclose the CAP-Gly 2 domain. A phosphoserine mark is found at Ser557 and Ser609. Residues 644 to 686 (GPTDFASGIWLGLELRSAKGKNDGSVGDKRYFTCKPNHGVLVR) enclose the CAP-Gly 3 domain.

The sequence is that of CAP-Gly domain-containing linker protein 4 (CLIP4) from Homo sapiens (Human).